The primary structure comprises 97 residues: MFQKQERIGLVVYLYYNRDARKLSKFGDLYYHSKRSRYLIIYINKNDLDTKLEEMRRLKCVKDIRPSAFDDIDRQFVGNLHRDETNNHQKGYQPPSY.

The protein belongs to the UPF0298 family.

It localises to the cytoplasm. The protein is UPF0298 protein MGAS9429_Spy0329 of Streptococcus pyogenes serotype M12 (strain MGAS9429).